A 340-amino-acid polypeptide reads, in one-letter code: Protein RecA (340 aa).

74 to 81 (GPESSGKT) provides a ligand contact to ATP.

It belongs to the RecA family.

The protein localises to the cytoplasm. Can catalyze the hydrolysis of ATP in the presence of single-stranded DNA, the ATP-dependent uptake of single-stranded DNA by duplex DNA, and the ATP-dependent hybridization of homologous single-stranded DNAs. It interacts with LexA causing its activation and leading to its autocatalytic cleavage. This is Protein RecA from Porphyromonas gingivalis (strain ATCC 33277 / DSM 20709 / CIP 103683 / JCM 12257 / NCTC 11834 / 2561).